A 426-amino-acid polypeptide reads, in one-letter code: Probable imidazolonepropionase (426 aa).

2 residues coordinate 4-imidazolone-5-propanoate: tyrosine 158 and histidine 192. Tyrosine 158 lines the N-formimidoyl-L-glutamate pocket. Residue histidine 260 participates in Fe(3+) binding. A Zn(2+)-binding site is contributed by histidine 260. Glutamate 263 is a binding site for 4-imidazolone-5-propanoate. Aspartate 334 lines the Fe(3+) pocket. Aspartate 334 provides a ligand contact to Zn(2+). Asparagine 336 contributes to the N-formimidoyl-L-glutamate binding site.

It belongs to the metallo-dependent hydrolases superfamily. HutI family. The cofactor is Zn(2+). Fe(3+) is required as a cofactor.

The catalysed reaction is 4-imidazolone-5-propanoate + H2O = N-formimidoyl-L-glutamate. It functions in the pathway amino-acid degradation; L-histidine degradation into L-glutamate; N-formimidoyl-L-glutamate from L-histidine: step 3/3. This Dictyostelium discoideum (Social amoeba) protein is Probable imidazolonepropionase (amdhd1).